Reading from the N-terminus, the 435-residue chain is Pregnancy-specific beta-1-glycoprotein 6 (435 aa).

Residues 1–34 (MGPLSAPPCTQHITWKGLLLTASLLNFWNLPTTA) form the signal peptide. The region spanning 35–143 (QVIIEAKPPK…TGYFTVTLYS (109 aa)) is the Ig-like V-type domain. N-linked (GlcNAc...) asparagine glycosylation is found at Asn-61, Asn-103, and Asn-110. Positions 126–128 (RGD) match the Cell attachment site motif. Ig-like C2-type domains follow at residues 148–233 (PSIS…VTLN), 241–326 (PYIT…VTLN), and 334–405 (PRIY…KEIS). 3 disulfides stabilise this stretch: Cys-168-Cys-216, Cys-261-Cys-309, and Cys-353-Cys-393. N-linked (GlcNAc...) asparagine glycans are attached at residues Asn-198, Asn-267, Asn-302, and Asn-386.

It belongs to the immunoglobulin superfamily. CEA family.

The protein localises to the secreted. This is Pregnancy-specific beta-1-glycoprotein 6 (PSG6) from Homo sapiens (Human).